Here is a 331-residue protein sequence, read N- to C-terminus: Glyceraldehyde-3-phosphate dehydrogenase, cytosolic (331 aa).

NAD(+) contacts are provided by residues arginine 12–isoleucine 13, aspartate 34, and arginine 78. Residues serine 149–threonine 151, threonine 180, threonine 209–glycine 210, and arginine 232 each bind D-glyceraldehyde 3-phosphate. Cysteine 150 functions as the Nucleophile in the catalytic mechanism. Asparagine 314 lines the NAD(+) pocket.

Belongs to the glyceraldehyde-3-phosphate dehydrogenase family. As to quaternary structure, homotetramer.

The protein resides in the cytoplasm. The catalysed reaction is D-glyceraldehyde 3-phosphate + phosphate + NAD(+) = (2R)-3-phospho-glyceroyl phosphate + NADH + H(+). Its pathway is carbohydrate degradation; glycolysis; pyruvate from D-glyceraldehyde 3-phosphate: step 1/5. The polypeptide is Glyceraldehyde-3-phosphate dehydrogenase, cytosolic (Trypanosoma brucei brucei).